Reading from the N-terminus, the 288-residue chain is MFATKTVLFIAVVSLLGTFSSAAVDTFIYGGCSQEKYFPGSPYESNVNSLLTSFVSSASLYTYNNFTTNGISGDSSSVYGLYQCRGDLSSGSGDCARCVARAVSRLGSLCAMASGGALQLEGCFVKYDNTTFLGVEDKTVVVRRCGPPVGYNSDEMTRRDSVVGSLAASSGGSYRVGVSGELQGVAQCTGDLSATECQDCLMEAIGRLRTDCGGAAWGDVYLAKCYARYSARGGHSRANGYGGNRNNNDDDEIEKTLAIIVGLIAGVTLLVVFLSFMAKSCERGKGGK.

Residues 1–22 form the signal peptide; sequence MFATKTVLFIAVVSLLGTFSSA. At 23 to 256 the chain is on the extracellular side; it reads AVDTFIYGGC…NNDDDEIEKT (234 aa). Gnk2-homologous domains follow at residues 25–132 and 137–234; these read DTFI…NTTF and DKTV…ARGG. 6 disulfide bridges follow: Cys32–Cys110, Cys84–Cys95, Cys98–Cys123, Cys145–Cys212, Cys188–Cys197, and Cys200–Cys225. A helical membrane pass occupies residues 257–277; that stretch reads LAIIVGLIAGVTLLVVFLSFM. A necessary and sufficient for plasmodesmal targeting region spans residues 257 to 277; it reads LAIIVGLIAGVTLLVVFLSFM. The Cytoplasmic segment spans residues 278-288; it reads AKSCERGKGGK.

The protein belongs to the cysteine-rich repeat secretory protein family. Plasmodesmata-located proteins (PDLD) subfamily. In terms of assembly, (Microbial infection) Interacts with Grapevine fanleaf virus (GFLV) 2B-MP. Highly expressed in inflorescence silique (at mRNA level).

The protein resides in the cell membrane. It is found in the cell junction. It localises to the plasmodesma. Functionally, modulates cell-to-cell trafficking. This chain is Plasmodesmata-located protein 6, found in Arabidopsis thaliana (Mouse-ear cress).